Reading from the N-terminus, the 5087-residue chain is Nonribosomal peptide synthetase sidC (5087 aa).

The interval 165–563 (HEMVRHTGNE…NGELQCMGRI (399 aa)) is adenylation 1. The region spanning 671–744 (EPAGDIEQKI…KMAALVLKSQ (74 aa)) is the Carrier 1 domain. O-(pantetheine 4'-phosphoryl)serine is present on Ser-705. The segment at 782 to 1112 (DIIPCSPIQT…LFDTLFVWQD (331 aa)) is condensation 1. The interval 1217–1611 (ELAKTDSERI…GRRDDLVKIR (395 aa)) is adenylation 2. Positions 1740 to 1817 (ENLTDNEAKV…RLTRKISQSI (78 aa)) constitute a Carrier 2 domain. Ser-1777 carries the post-translational modification O-(pantetheine 4'-phosphoryl)serine. Positions 1855-2272 (KILPCTSLQE…RVMDFSLVES (418 aa)) are condensation 2. Residues 2302–2378 (EEWSAESLEI…EIASVLQGSK (77 aa)) enclose the Carrier 3 domain. Residue Ser-2339 is modified to O-(pantetheine 4'-phosphoryl)serine. A condensation 3 region spans residues 2419–2831 (PCTTPQAGML…STSSSLDTAS (413 aa)). The adenylation 3 stretch occupies residues 2860–3258 (ATRHPSRVAL…GRIDDQVKLR (399 aa)). Residues 3387-3464 (TEDTDTIRKI…LLAKAVESPD (78 aa)) enclose the Carrier 4 domain. Position 3424 is an O-(pantetheine 4'-phosphoryl)serine (Ser-3424). Positions 3506 to 3910 (ITPCTSLQDG…RSLVEEPFSN (405 aa)) are condensation 4. The Carrier 5 domain occupies 3943-4019 (FQWSQAASLL…TMMAEVTVNG (77 aa)). Ser-3980 carries the O-(pantetheine 4'-phosphoryl)serine modification. The tract at residues 4051 to 4416 (EHIYPATPLQ…EYSICVELEA (366 aa)) is condensation 5. Residues 4496–4569 (SLLEERIRDT…KMAEIVNSAR (74 aa)) form the Carrier 6 domain. O-(pantetheine 4'-phosphoryl)serine is present on Ser-4530. The condensation 6 stretch occupies residues 4610–4913 (FLPATAGQVY…IQSDLHEIGS (304 aa)). Residues 5013-5048 (DVYKVSPPGSQLSQDSPEKQEANNKPSPQPSVDIEA) are disordered.

Belongs to the NRP synthetase family.

It participates in siderophore biosynthesis. In terms of biological role, nonribosomal peptide synthetase; part of the siderophore biosynthetic pathway. Arthroderma benhamiae produces 2 types of extracellular siderophores, ferrichrome C and ferricrocin. The biosynthesis of these siderophores depends on the hydroxylation of ornithine to N(5)-hydroxyornithine, catalyzed by the monooxygenase sidA. The structure of ferricrocin differs from ferrichrome C only by a serine for alanine substitution and the assembly of both siderophores is suggested to be performed by the nonribosomal peptide synthase (NRPS) sidC. The polypeptide is Nonribosomal peptide synthetase sidC (Arthroderma benhamiae (strain ATCC MYA-4681 / CBS 112371) (Trichophyton mentagrophytes)).